The chain runs to 621 residues: MAU2 chromatid cohesion factor homolog (621 aa).

3 TPR repeats span residues 96-129 (FDTASLLAQLHLQTEQSSHAKAMLRRAVELSQNN), 451-484 (GGFYYVQGLHAFHKNSFHEAKRFLRETLKMANAE), and 491-524 (SCSLVLLSHVFLSIGNSKESMNMVTPAMQLASKI).

Belongs to the SCC4/mau-2 family. In terms of assembly, interacts with Nipped-B to form the cohesin loading complex.

It is found in the nucleus. The protein resides in the nucleoplasm. In terms of biological role, required for association of the cohesin complex with chromatin during interphase. Plays a role in sister chromatid cohesion and normal progression through prometaphase. This Drosophila virilis (Fruit fly) protein is MAU2 chromatid cohesion factor homolog.